An 885-amino-acid polypeptide reads, in one-letter code: Protein PTHB1 (885 aa).

Residues 1–406 (MSLFKARDWW…LQGVWPLTEQ (406 aa)) form a seven-bladed beta-propeller region. An interaction with LZTL1 region spans residues 684–764 (RDKTPAPLQH…FLPLQEDTQE (81 aa)).

As to quaternary structure, part of BBSome complex, that contains BBS1, BBS2, BBS4, BBS5, BBS7, BBS8/TTC8, BBS9 and BBIP10. Interacts with LZTL1; the interaction mediates the association of LZTL1 with the BBsome complex and regulates BBSome ciliary trafficking.

The protein localises to the cell projection. It localises to the cilium membrane. The protein resides in the cytoplasm. It is found in the cytoskeleton. Its subcellular location is the microtubule organizing center. The protein localises to the centrosome. It localises to the centriolar satellite. Its function is as follows. The BBSome complex is thought to function as a coat complex required for sorting of specific membrane proteins to the primary cilia. The BBSome complex is required for ciliogenesis but is dispensable for centriolar satellite function. This ciliogenic function is mediated in part by the Rab8 GDP/GTP exchange factor, which localizes to the basal body and contacts the BBSome. Rab8(GTP) enters the primary cilium and promotes extension of the ciliary membrane. Firstly the BBSome associates with the ciliary membrane and binds to RAB3IP/Rabin8, the guanosyl exchange factor (GEF) for Rab8 and then the Rab8-GTP localizes to the cilium and promotes docking and fusion of carrier vesicles to the base of the ciliary membrane. Required for proper BBSome complex assembly and its ciliary localization. This is Protein PTHB1 (Bbs9) from Mus musculus (Mouse).